Consider the following 893-residue polypeptide: Translation initiation factor IF-2 (893 aa).

Disordered stretches follow at residues 135 to 169 and 201 to 300; these read KAKAKADAEAKAKAKVLTEKPVQESAEDKAAKAEE and ENEK…ESMD. The segment covering 201–224 has biased composition (basic and acidic residues); it reads ENEKRWAEEEKARKEAEKTVDHHV. Low complexity predominate over residues 251–265; that stretch reads PSANAGNNANANAGA. The tr-type G domain occupies 393-562; sequence SRAPVVTIMG…LLEAEVLELK (170 aa). The tract at residues 402 to 409 is G1; that stretch reads GHVDHGKT. 402 to 409 contributes to the GTP binding site; it reads GHVDHGKT. The interval 427–431 is G2; sequence GITQH. Positions 448–451 are G3; sequence DTPG. Residues 448 to 452 and 502 to 505 each bind GTP; these read DTPGH and NKMD. Positions 502–505 are G4; it reads NKMD. The interval 538–540 is G5; sequence SAK.

This sequence belongs to the TRAFAC class translation factor GTPase superfamily. Classic translation factor GTPase family. IF-2 subfamily.

The protein localises to the cytoplasm. In terms of biological role, one of the essential components for the initiation of protein synthesis. Protects formylmethionyl-tRNA from spontaneous hydrolysis and promotes its binding to the 30S ribosomal subunits. Also involved in the hydrolysis of GTP during the formation of the 70S ribosomal complex. This is Translation initiation factor IF-2 from Shewanella halifaxensis (strain HAW-EB4).